The primary structure comprises 490 residues: Mitochondria-eating protein (490 aa).

The stretch at 112–210 forms a coiled coil; the sequence is IRELSSVHES…RILRDEVSFL (99 aa). Low complexity-rich tracts occupy residues 224–241 and 456–490; these read SRSPSPLLRRSRSVSPVR and RSSSPVRSRSGSPSRTFMASHSRSPSPGRLSSSRL. Disordered stretches follow at residues 224-253 and 455-490; these read SRSPSPLLRRSRSVSPVRGESPTRAQLTSS and SRSSSPVRSRSGSPSRTFMASHSRSPSPGRLSSSRL.

The protein belongs to the MIEAP family.

It is found in the cytoplasm. The protein resides in the mitochondrion outer membrane. Its subcellular location is the mitochondrion matrix. Its function is as follows. Key regulator of mitochondrial quality that mediates the repairing or degradation of unhealthy mitochondria in response to mitochondrial damage. Mediator of mitochondrial protein catabolic process (also named MALM) by mediating the degradation of damaged proteins inside mitochondria by promoting the accumulation in the mitochondrial matrix of hydrolases that are characteristic of the lysosomal lumen. Also involved in mitochondrion degradation of damaged mitochondria by promoting the formation of vacuole-like structures (named MIV), which engulf and degrade unhealthy mitochondria by accumulating lysosomes. Binds cardiolipin. May form molecular condensates (non-membrane-bounded organelles) within mitochondria that compartmentalize and promote cardiolipin metabolism. The chain is Mitochondria-eating protein (spata18) from Danio rerio (Zebrafish).